The chain runs to 450 residues: Probable glycine dehydrogenase (decarboxylating) subunit 1 (450 aa).

Belongs to the GcvP family. N-terminal subunit subfamily. The glycine cleavage system is composed of four proteins: P, T, L and H. In this organism, the P 'protein' is a heterodimer of two subunits.

It catalyses the reaction N(6)-[(R)-lipoyl]-L-lysyl-[glycine-cleavage complex H protein] + glycine + H(+) = N(6)-[(R)-S(8)-aminomethyldihydrolipoyl]-L-lysyl-[glycine-cleavage complex H protein] + CO2. In terms of biological role, the glycine cleavage system catalyzes the degradation of glycine. The P protein binds the alpha-amino group of glycine through its pyridoxal phosphate cofactor; CO(2) is released and the remaining methylamine moiety is then transferred to the lipoamide cofactor of the H protein. The sequence is that of Probable glycine dehydrogenase (decarboxylating) subunit 1 from Desulfotalea psychrophila (strain LSv54 / DSM 12343).